A 96-amino-acid polypeptide reads, in one-letter code: HssA/B-like protein 25 (96 aa).

The protein belongs to the hssA/B family.

This Dictyostelium discoideum (Social amoeba) protein is HssA/B-like protein 25 (hssl25).